Consider the following 235-residue polypeptide: Acyl-protein thioesterase 1 (235 aa).

Catalysis depends on charge relay system residues serine 119, aspartate 172, and histidine 206.

Belongs to the AB hydrolase superfamily. AB hydrolase 2 family.

It localises to the cytoplasm. Its subcellular location is the nucleus. The enzyme catalyses S-hexadecanoyl-L-cysteinyl-[protein] + H2O = L-cysteinyl-[protein] + hexadecanoate + H(+). Its function is as follows. Hydrolyzes fatty acids from S-acylated cysteine residues in proteins with a strong preference for palmitoylated G-alpha proteins over other acyl substrates. Mediates the deacylation of G-alpha proteins such as GPA1 in vivo, but has weak or no activity toward palmitoylated Ras proteins. Has weak lysophospholipase activity in vitro; however such activity may not exist in vivo. This chain is Acyl-protein thioesterase 1, found in Eremothecium gossypii (strain ATCC 10895 / CBS 109.51 / FGSC 9923 / NRRL Y-1056) (Yeast).